The following is a 142-amino-acid chain: Universal stress protein D (142 aa).

It belongs to the universal stress protein A family.

The protein localises to the cytoplasm. Its function is as follows. Required for resistance to DNA-damaging agents. This chain is Universal stress protein D (uspD), found in Escherichia coli (strain K12).